A 178-amino-acid chain; its full sequence is Large ribosomal subunit protein uL6 (178 aa).

Belongs to the universal ribosomal protein uL6 family. As to quaternary structure, part of the 50S ribosomal subunit.

In terms of biological role, this protein binds to the 23S rRNA, and is important in its secondary structure. It is located near the subunit interface in the base of the L7/L12 stalk, and near the tRNA binding site of the peptidyltransferase center. This is Large ribosomal subunit protein uL6 from Francisella tularensis subsp. mediasiatica (strain FSC147).